A 218-amino-acid chain; its full sequence is Octanoyltransferase (218 aa).

The region spanning 32-218 (GDAPEAVWLL…LRTFSRSFPD (187 aa)) is the BPL/LPL catalytic domain. Residues 71-78 (RGGQYTYH), 151-153 (AIG), and 164-166 (GLS) contribute to the substrate site. Cys-182 serves as the catalytic Acyl-thioester intermediate.

Belongs to the LipB family.

The protein resides in the cytoplasm. The catalysed reaction is octanoyl-[ACP] + L-lysyl-[protein] = N(6)-octanoyl-L-lysyl-[protein] + holo-[ACP] + H(+). It participates in protein modification; protein lipoylation via endogenous pathway; protein N(6)-(lipoyl)lysine from octanoyl-[acyl-carrier-protein]: step 1/2. Functionally, catalyzes the transfer of endogenously produced octanoic acid from octanoyl-acyl-carrier-protein onto the lipoyl domains of lipoate-dependent enzymes. Lipoyl-ACP can also act as a substrate although octanoyl-ACP is likely to be the physiological substrate. The chain is Octanoyltransferase from Cereibacter sphaeroides (strain ATCC 17025 / ATH 2.4.3) (Rhodobacter sphaeroides).